Consider the following 101-residue polypeptide: Protamine-3 (101 aa).

The interval 1 to 101 (MGSRCAKLST…PSPEPKQTHS (101 aa)) is disordered. The span at 45–67 (EGEEEEEDEEEEEEEEEEEEEEQ) shows a compositional bias: acidic residues. Phosphoserine is present on S93.

This sequence belongs to the protamine P3 family. Testis.

It localises to the nucleus. The protein localises to the chromosome. Its function is as follows. Protamines substitute for histones in the chromatin of sperm during the haploid phase of spermatogenesis. They compact sperm DNA into a highly condensed, stable and inactive complex. The protein is Protamine-3 (Prm3) of Mus musculus (Mouse).